The sequence spans 259 residues: L-arginine-binding protein (259 aa).

Residues 1–21 (MKKLALLGALALSVLSLPTFA) form the signal peptide.

Belongs to the bacterial solute-binding protein 3 family.

It localises to the periplasm. Binds L-arginine with high affinity. Shows no measurable affinity for L-ornithine. This is L-arginine-binding protein from Pseudomonas aeruginosa (strain ATCC 15692 / DSM 22644 / CIP 104116 / JCM 14847 / LMG 12228 / 1C / PRS 101 / PAO1).